A 237-amino-acid polypeptide reads, in one-letter code: Lipid A 1-diphosphate synthase (237 aa).

Topologically, residues 1 to 5 (MIKNL) are cytoplasmic. A helical membrane pass occupies residues 6–26 (PQIVLLNIVGLALFLSWYIPV). At 27–62 (NHGFWLPIDADIFYFFNQKLVESKAFLWLVALTNNR) the chain is on the periplasmic side. The chain crosses the membrane as a helical span at residues 63 to 83 (AFDGCSLLAMGMLMLSFWLKE). Over 84–90 (NAPGRRR) the chain is Cytoplasmic. Residues 91-111 (IVIIGLVMLLTAVVLNQLGQA) form a helical membrane-spanning segment. The Periplasmic portion of the chain corresponds to 112-145 (LIPVKRASPTLTFTDINRVSELLSVPTKDASRDS). Residue Lys-167 is a topological domain, cytoplasmic. Residues 168-188 (VAGLIALIIFVVFAFPRVMIG) form a helical membrane-spanning segment. At 189 to 194 (AHWFTD) the chain is on the periplasmic side. A helical transmembrane segment spans residues 195-215 (IIVGSMTVILIGLPWVLLTPL). Topologically, residues 216 to 237 (SDRLITFFDKSLPGKNKHFQNK) are cytoplasmic.

This sequence belongs to the LpxT phosphotransferase family.

It localises to the cell inner membrane. It catalyses the reaction di-trans,octa-cis-undecaprenyl diphosphate + alpha-Kdo-(2-&gt;4)-alpha-Kdo-(2-&gt;6)-lipid A (E. coli) = (Kdo)2-lipid A 1-diphosphate + di-trans,octa-cis-undecaprenyl phosphate. The protein operates within bacterial outer membrane biogenesis; lipopolysaccharide biosynthesis. Inhibited by BasR. This regulation does not occur at the level of transcription, but rather following the assembly of LpxT into the inner membrane. Functionally, involved in the modification of the lipid A domain of lipopolysaccharides (LPS). Transfers a phosphate group from undecaprenyl pyrophosphate (C55-PP) to lipid A to form lipid A 1-diphosphate. Contributes to the recycling of undecaprenyl phosphate (C55-P). In vitro, has low undecaprenyl-diphosphate phosphatase activity. The sequence is that of Lipid A 1-diphosphate synthase from Escherichia coli (strain K12).